The chain runs to 367 residues: Diphthine methyltransferase homolog (367 aa).

WD repeat units lie at residues 84–124, 132–173, 180–220, and 234–274; these read NFNS…KKLE, SLSN…SKVT, AHDY…NHND, and RCDM…QPII.

Belongs to the DPH7 family.

It carries out the reaction diphthine methyl ester-[translation elongation factor 2] + H2O = diphthine-[translation elongation factor 2] + methanol + H(+). The protein operates within protein modification; peptidyl-diphthamide biosynthesis. Functionally, catalyzes the demethylation of diphthine methyl ester to form diphthine, an intermediate diphthamide biosynthesis, a post-translational modification of histidine which occurs in translation elongation factor 2 (efbA). The sequence is that of Diphthine methyltransferase homolog (wdr85) from Dictyostelium discoideum (Social amoeba).